A 424-amino-acid chain; its full sequence is Na(+)/H(+) antiporter NhaA (424 aa).

11 helical membrane passes run Ile23 to Leu43, Val65 to Ile85, Leu102 to Val122, Gly131 to Gly151, Leu160 to Phe180, Ala183 to Cys203, Leu211 to His231, Ala265 to Val285, Ile303 to Val323, Ala341 to Phe361, and Ile373 to Ala393.

The protein belongs to the NhaA Na(+)/H(+) (TC 2.A.33) antiporter family.

The protein localises to the cell inner membrane. The enzyme catalyses Na(+)(in) + 2 H(+)(out) = Na(+)(out) + 2 H(+)(in). Na(+)/H(+) antiporter that extrudes sodium in exchange for external protons. The chain is Na(+)/H(+) antiporter NhaA from Sphingopyxis alaskensis (strain DSM 13593 / LMG 18877 / RB2256) (Sphingomonas alaskensis).